Reading from the N-terminus, the 266-residue chain is Small ribosomal subunit protein uS2 (266 aa).

The interval 227 to 266 (GVSFTEETPSEPIQSDSSEEEEGSLDISDLFEDTDLKEEE) is disordered. Residues 231 to 240 (TEETPSEPIQ) show a composition bias toward polar residues. A compositionally biased stretch (acidic residues) spans 243–266 (SSEEEEGSLDISDLFEDTDLKEEE).

Belongs to the universal ribosomal protein uS2 family.

In Pseudothermotoga lettingae (strain ATCC BAA-301 / DSM 14385 / NBRC 107922 / TMO) (Thermotoga lettingae), this protein is Small ribosomal subunit protein uS2.